The sequence spans 90 residues: Small ribosomal subunit protein uS15 (90 aa).

It belongs to the universal ribosomal protein uS15 family. Part of the 30S ribosomal subunit. Forms a bridge to the 50S subunit in the 70S ribosome, contacting the 23S rRNA.

Its function is as follows. One of the primary rRNA binding proteins, it binds directly to 16S rRNA where it helps nucleate assembly of the platform of the 30S subunit by binding and bridging several RNA helices of the 16S rRNA. In terms of biological role, forms an intersubunit bridge (bridge B4) with the 23S rRNA of the 50S subunit in the ribosome. This chain is Small ribosomal subunit protein uS15, found in Helicobacter acinonychis (strain Sheeba).